The sequence spans 131 residues: Peptide methionine sulfoxide reductase MsrB (131 aa).

Residues 8-130 (LDEWRSMLDP…NSVCIDLRPR (123 aa)) form the MsrB domain. Zn(2+)-binding residues include cysteine 47, cysteine 50, cysteine 96, and cysteine 99. Cysteine 119 functions as the Nucleophile in the catalytic mechanism.

It belongs to the MsrB Met sulfoxide reductase family. Zn(2+) serves as cofactor.

The catalysed reaction is L-methionyl-[protein] + [thioredoxin]-disulfide + H2O = L-methionyl-(R)-S-oxide-[protein] + [thioredoxin]-dithiol. The polypeptide is Peptide methionine sulfoxide reductase MsrB (Pseudomonas putida (strain ATCC 47054 / DSM 6125 / CFBP 8728 / NCIMB 11950 / KT2440)).